The primary structure comprises 675 residues: Methionine--tRNA ligase (675 aa).

The 'HIGH' region motif lies at 15–25; it reads PYANGSIHLGH. Zn(2+) is bound by residues cysteine 146, cysteine 149, cysteine 159, and cysteine 162. The 'KMSKS' region motif lies at 332-336; sequence KMSKS. An ATP-binding site is contributed by lysine 335. One can recognise a tRNA-binding domain in the interval 573-675; it reads DFAKVDMRIA…SGAQPGMQVK (103 aa).

Belongs to the class-I aminoacyl-tRNA synthetase family. MetG type 1 subfamily. Homodimer. The cofactor is Zn(2+).

The protein localises to the cytoplasm. It catalyses the reaction tRNA(Met) + L-methionine + ATP = L-methionyl-tRNA(Met) + AMP + diphosphate. Functionally, is required not only for elongation of protein synthesis but also for the initiation of all mRNA translation through initiator tRNA(fMet) aminoacylation. This is Methionine--tRNA ligase from Serratia proteamaculans (strain 568).